The following is a 386-amino-acid chain: Succinate--CoA ligase [ADP-forming] subunit beta (386 aa).

One can recognise an ATP-grasp domain in the interval 9 to 244 (KALFREHGIP…ETQEDAREAR (236 aa)). Residues lysine 46, 53–55 (GRG), glutamate 99, threonine 102, and glutamate 107 contribute to the ATP site. 2 residues coordinate Mg(2+): asparagine 199 and aspartate 213. Residues asparagine 264 and 321–323 (GIV) each bind substrate.

This sequence belongs to the succinate/malate CoA ligase beta subunit family. In terms of assembly, heterotetramer of two alpha and two beta subunits. Requires Mg(2+) as cofactor.

It catalyses the reaction succinate + ATP + CoA = succinyl-CoA + ADP + phosphate. The catalysed reaction is GTP + succinate + CoA = succinyl-CoA + GDP + phosphate. It functions in the pathway carbohydrate metabolism; tricarboxylic acid cycle; succinate from succinyl-CoA (ligase route): step 1/1. Functionally, succinyl-CoA synthetase functions in the citric acid cycle (TCA), coupling the hydrolysis of succinyl-CoA to the synthesis of either ATP or GTP and thus represents the only step of substrate-level phosphorylation in the TCA. The beta subunit provides nucleotide specificity of the enzyme and binds the substrate succinate, while the binding sites for coenzyme A and phosphate are found in the alpha subunit. The protein is Succinate--CoA ligase [ADP-forming] subunit beta of Thioalkalivibrio sulfidiphilus (strain HL-EbGR7).